The following is a 783-amino-acid chain: Rabenosyn-5 (783 aa).

At Ala-2 the chain carries N-acetylalanine. Ser-3 bears the Phosphoserine mark. The C2H2-type zinc finger occupies 14-37 (FLCPLCLKDLQSFYQLQSHYEEEH). The interval 99–262 (RSHLSDFKKH…HCKDKLLKRE (164 aa)) is necessary for the correct targeting to endosomes. Residues 156–259 (DQDVPFCPDC…CCTHCKDKLL (104 aa)) form an FYVE-type zinc finger. Zn(2+)-binding residues include Cys-162, Cys-165, Cys-178, Cys-181, Cys-186, and Cys-189. The segment covering 206 to 223 (KDSLSTHTSPSQSPNSVH) has biased composition (polar residues). A disordered region spans residues 206–240 (KDSLSTHTSPSQSPNSVHGSRRGSISSMSSVSSVL). A phosphoserine mark is found at Ser-214, Ser-218, Ser-225, and Ser-229. Residues 227–239 (RGSISSMSSVSSV) show a composition bias toward low complexity. Zn(2+) contacts are provided by Cys-251 and Cys-254. Residues 263–499 (QQMDEKEHTP…QLQDEYDQQQ (237 aa)) form a necessary for interaction with RAB4A region. The segment at 263-783 (QQMDEKEHTP…TLAKQKGAPN (521 aa)) is necessary for interaction with EHD1. Coiled coils occupy residues 377 to 412 (TKEQ…KLEE) and 471 to 531 (QAKA…ELER). Basic and acidic residues-rich tracts occupy residues 387–399 (KRKQ…RTVE) and 405–414 (ESRRKLEERQ). Residues 387 to 433 (KRKQDLEQKRTVERQAALESRRKLEERQSGLASHTANGDVRSLRGIP) form a disordered region. Residues 495 to 514 (YDQQQTEKAIELSRKQAEEE) form the UIM domain. Disordered regions lie at residues 569 to 638 (SYSL…SPTE) and 663 to 733 (FEED…EEHI). Polar residues-rich tracts occupy residues 571-584 (SLDQ…SSTA) and 610-623 (TLPQ…SDKA). Positions 627 to 783 (PFDEDDLSSP…TLAKQKGAPN (157 aa)) are necessary for interaction with RAB5A. Residues 663 to 673 (FEEDAEEEEVA) show a composition bias toward acidic residues. Ser-686 is modified (phosphoserine). Positions 721–733 (VDSDSGMEAEEHI) are enriched in acidic residues.

As to quaternary structure, interacts with EHD1, RAB4A, RAB5A, RAB22A, RAB24 and VPS45. Binds simultaneously to RAB4A and RAB5A in vitro. Interacts with RAB4A and RAB5A that has been activated by GTP binding.

It localises to the cell membrane. It is found in the early endosome membrane. In terms of biological role, rab4/Rab5 effector protein acting in early endocytic membrane fusion and membrane trafficking of recycling endosomes. Required for endosome fusion either homotypically or with clathrin coated vesicles. Plays a role in the lysosomal trafficking of CTSD/cathepsin D from the Golgi to lysosomes. Also promotes the recycling of transferrin directly from early endosomes to the plasma membrane. Binds phospholipid vesicles containing phosphatidylinositol 3-phosphate (PtdInsP3). Plays a role in the recycling of transferrin receptor to the plasma membrane. This is Rabenosyn-5 from Mus musculus (Mouse).